The following is a 477-amino-acid chain: Ketoisovalerate oxidoreductase subunit VorA (477 aa).

Heterotrimer of the VorA, VorB and VorC subunits.

The catalysed reaction is 3-methyl-2-oxobutanoate + 2 oxidized [2Fe-2S]-[ferredoxin] + CoA = 2-methylpropanoyl-CoA + 2 reduced [2Fe-2S]-[ferredoxin] + CO2 + H(+). This Methanothermobacter thermautotrophicus (strain ATCC 29096 / DSM 1053 / JCM 10044 / NBRC 100330 / Delta H) (Methanobacterium thermoautotrophicum) protein is Ketoisovalerate oxidoreductase subunit VorA (vorA).